Consider the following 158-residue polypeptide: GTP-dependent dephospho-CoA kinase (158 aa).

The GTP site is built by aspartate 35, valine 36, aspartate 54, lysine 56, glutamate 109, and aspartate 132.

Belongs to the GTP-dependent DPCK family.

The catalysed reaction is 3'-dephospho-CoA + GTP = GDP + CoA + H(+). Its pathway is cofactor biosynthesis; coenzyme A biosynthesis. Catalyzes the GTP-dependent phosphorylation of the 3'-hydroxyl group of dephosphocoenzyme A to form coenzyme A (CoA). This is GTP-dependent dephospho-CoA kinase from Methanococcus vannielii (strain ATCC 35089 / DSM 1224 / JCM 13029 / OCM 148 / SB).